A 143-amino-acid polypeptide reads, in one-letter code: Na(+)/H(+) antiporter subunit B (143 aa).

4 helical membrane-spanning segments follow: residues 9–31, 36–58, 71–93, and 117–139; these read LILQTATKLVSFIILLFSFYLFL, APGGGFVGGLITSSSIVLLLLAY, FIYVAGAGLLLAVLTGVGSFVFG, and ATIFDLGVYLVVVGITMTIIQTI.

The protein belongs to the CPA3 antiporters (TC 2.A.63) subunit B family. Forms a heterooligomeric complex that consists of seven subunits: MrpA, MrpB, MrpC, MrpD, MrpE, MrpF and MrpG.

The protein resides in the cell membrane. Functionally, mrp complex is a Na(+)/H(+) antiporter that is considered to be the major Na(+) excretion system in B.subtilis. Has a major role in Na(+) resistance and a minor role in Na(+)- and K(+)-dependent pH homeostasis as compared to TetB. MrpA may be the actual Na(+)/H(+) antiporter, although the six other Mrp proteins are all required for Na(+)/H(+) antiport activity and Na(+) resistance. MrpA is required for initiation of sporulation when external Na(+) concentration increases. Also transports Li(+) but not K(+), Ca(2+) or Mg(2+). This is Na(+)/H(+) antiporter subunit B (mrpB) from Bacillus subtilis (strain 168).